The sequence spans 116 residues: Flagellar transcriptional regulator FlhD (116 aa).

It belongs to the FlhD family. As to quaternary structure, homodimer; disulfide-linked. Forms a heterohexamer composed of two FlhC and four FlhD subunits. Each FlhC binds a FlhD dimer, forming a heterotrimer, and a hexamer assembles by dimerization of two heterotrimers.

The protein resides in the cytoplasm. Functions in complex with FlhC as a master transcriptional regulator that regulates transcription of several flagellar and non-flagellar operons by binding to their promoter region. Activates expression of class 2 flagellar genes, including fliA, which is a flagellum-specific sigma factor that turns on the class 3 genes. Also regulates genes whose products function in a variety of physiological pathways. This Escherichia coli O157:H7 protein is Flagellar transcriptional regulator FlhD.